A 1205-amino-acid chain; its full sequence is Nitric oxide synthase 3 (1205 aa).

A disordered region spans residues 1–73 (MGNLKSVGQE…PPDGPKFPRV (73 aa)). The N-myristoyl glycine moiety is linked to residue G2. Residues C15 and C26 are each lipidated (S-palmitoyl cysteine). A compositionally biased stretch (gly residues) spans 15-27 (CGLGLGLGLGLCG). Positions 44 to 54 (LAPPPSPPPAP) are enriched in pro residues. The Zn(2+) site is built by C96 and C101. The interaction with NOSIP stretch occupies residues 100–488 (RCLGSLVFPR…TDPWKGSASK (389 aa)). S104 provides a ligand contact to (6R)-L-erythro-5,6,7,8-tetrahydrobiopterin. Position 116 is a phosphoserine; by CDK5 (S116). C186 contributes to the heme b binding site. Q249, W358, Y359, E363, and N368 together coordinate L-arginine. Residues A448, W449, and F462 each contribute to the (6R)-L-erythro-5,6,7,8-tetrahydrobiopterin site. A heme b-binding site is contributed by Y477. The tract at residues 492–512 (VTRKKTFKEVANAVKISASLM) is calmodulin-binding. T497 is subject to Phosphothreonine; by AMPK. A Flavodoxin-like domain is found at 522 to 705 (ATILYGSETG…AFGGWAQAAF (184 aa)). Residues S528, E529, T530, R532, S574, and T575 each contribute to the FMN site. Residues S617, S635, and S640 each carry the phosphoserine modification. FMN-binding residues include S656, C663, E689, and Q693. An FAD-binding FR-type domain is found at 758 to 1004 (RKMVQATVLA…IRGAPSFRLP (247 aa)). R778 is a binding site for NADP(+). H800 contributes to the FAD binding site. Residues 819–850 (VEDPPPPGEPVAVEQLEKGSPGGPPPSWVRDP) form a disordered region. The residue at position 838 (S838) is a Phosphoserine. Positions 940, 942, 943, 958, 960, 964, 977, 978, and 979 each coordinate FAD. NADP(+) is bound by residues T1018, R1051, S1080, R1081, K1087, Y1089, and Q1091. A Phosphothreonine modification is found at T1177. S1179 carries the post-translational modification Phosphoserine; by AMPK. S1181 carries the phosphoserine modification.

The protein belongs to the NOS family. As to quaternary structure, homodimer. Interacts with NOSIP and NOSTRIN. Interacts with HSP90AB1. Forms a complex with ASL, ASS1 and SLC7A1; the complex regulates cell-autonomous L-arginine synthesis and citrulline recycling while channeling extracellular L-arginine to nitric oxide synthesis pathway. It depends on heme b as a cofactor. Requires FAD as cofactor. The cofactor is FMN. (6R)-L-erythro-5,6,7,8-tetrahydrobiopterin serves as cofactor. Phosphorylation by AMPK at Ser-1179 in the presence of Ca(2+)-calmodulin (CaM) activates activity. In absence of Ca(2+)-calmodulin, AMPK also phosphorylates Thr-497, resulting in inhibition of activity. Phosphorylation of Ser-116 by CDK5 reduces activity.

It localises to the membrane. The protein resides in the caveola. Its subcellular location is the cytoplasm. It is found in the cytoskeleton. The protein localises to the golgi apparatus. It localises to the cell membrane. The catalysed reaction is 2 L-arginine + 3 NADPH + 4 O2 + H(+) = 2 L-citrulline + 2 nitric oxide + 3 NADP(+) + 4 H2O. With respect to regulation, stimulated by calcium/calmodulin. Inhibited by NOSIP and NOSTRIN. In terms of biological role, produces nitric oxide (NO) which is implicated in vascular smooth muscle relaxation through a cGMP-mediated signal transduction pathway. NO mediates vascular endothelial growth factor (VEGF)-induced angiogenesis in coronary vessels and promotes blood clotting through the activation of platelets. In Canis lupus familiaris (Dog), this protein is Nitric oxide synthase 3 (NOS3).